Consider the following 381-residue polypeptide: Putative F-box protein At3g17500 (381 aa).

Residues methionine 1–histidine 45 form the F-box domain.

The protein is Putative F-box protein At3g17500 of Arabidopsis thaliana (Mouse-ear cress).